The primary structure comprises 317 residues: METWQEVTVHVHRDAQEAVSHVLIETGSQGVAIADSADYIGQKDRFGELYPDVEQSDMIAITAYYPSSTNLADVIATINEQLAELASFGLQVGQVTVDSQELAEEDWADNWKKYYEPARITHDLTIVPSWTDYDASAGEKVIKLDPGMAFGTGTHPTTKMSLFALEQVLRGGETVIDVGTGSGVLSIASSLLGAKTIYAYDLDDVAVRVAQENIDLNQGTDNIHVAAGDLLKGVSQEADVIVANILADILVLLTDDAYRLVKKEGYLILSGIISEKLDMVLETAFSAGFFLETHMVQGEWNALVFKKTDDISGVIGG.

4 residues coordinate S-adenosyl-L-methionine: T158, G179, D201, and N244.

The protein belongs to the methyltransferase superfamily. PrmA family.

The protein resides in the cytoplasm. It catalyses the reaction L-lysyl-[protein] + 3 S-adenosyl-L-methionine = N(6),N(6),N(6)-trimethyl-L-lysyl-[protein] + 3 S-adenosyl-L-homocysteine + 3 H(+). Its function is as follows. Methylates ribosomal protein L11. The sequence is that of Ribosomal protein L11 methyltransferase from Streptococcus pyogenes serotype M12 (strain MGAS2096).